A 449-amino-acid polypeptide reads, in one-letter code: Uric acid permease PucJ (449 aa).

13 consecutive transmembrane segments (helical) span residues 11–31 (LSLQ…LLVG), 41–61 (LSYL…LQTL), 67–87 (GIGL…MIAI), 91–111 (YGIH…FLFA), 119–139 (VLFP…SLVP), 158–178 (EYGS…ILVL), 191–211 (VLIG…VSFS), 229–249 (APAF…VIIV), 277–297 (AEGI…NTFA), 313–333 (IVVT…IAAL), 334–354 (ASAV…GMVI), 372–392 (LLTI…PGIF), and 401–421 (ILVS…NLFF).

The protein belongs to the nucleobase:cation symporter-2 (NCS2) (TC 2.A.40) family.

Its subcellular location is the cell membrane. Functionally, uptake of uric acid. This chain is Uric acid permease PucJ (pucJ), found in Bacillus subtilis (strain 168).